Here is a 110-residue protein sequence, read N- to C-terminus: Large ribosomal subunit protein P1B (110 aa).

Residues 69 to 85 (PAAGGAGAPAAAAGGEA) show a composition bias toward low complexity. Positions 69–110 (PAAGGAGAPAAAAGGEAAAEEQKEEAKEEEESDEDMGFGLFD) are disordered. Residues 95 to 104 (KEEEESDEDM) show a composition bias toward acidic residues.

The protein belongs to the eukaryotic ribosomal protein P1/P2 family. In terms of assembly, component of the large ribosomal subunit (LSU). Mature yeast ribosomes consist of a small (40S) and a large (60S) subunit. The 40S small subunit contains 1 molecule of ribosomal RNA (18S rRNA) and at least 33 different proteins. The large 60S subunit contains 3 rRNA molecules (25S, 5.8S and 5S rRNA) and at least 46 different proteins. The acidic ribosomal P-proteins form the stalk structure of the 60S subunit. They are organized as a pentameric complex in which uL10/P0 interacts with 2 heterodimers of P1 and P2 proteins.

It localises to the cytoplasm. Functionally, component of the ribosome, a large ribonucleoprotein complex responsible for the synthesis of proteins in the cell. The small ribosomal subunit (SSU) binds messenger RNAs (mRNAs) and translates the encoded message by selecting cognate aminoacyl-transfer RNA (tRNA) molecules. The large subunit (LSU) contains the ribosomal catalytic site termed the peptidyl transferase center (PTC), which catalyzes the formation of peptide bonds, thereby polymerizing the amino acids delivered by tRNAs into a polypeptide chain. The nascent polypeptides leave the ribosome through a tunnel in the LSU and interact with protein factors that function in enzymatic processing, targeting, and the membrane insertion of nascent chains at the exit of the ribosomal tunnel. In Schizosaccharomyces pombe (strain 972 / ATCC 24843) (Fission yeast), this protein is Large ribosomal subunit protein P1B (rpp102).